Here is a 354-residue protein sequence, read N- to C-terminus: Tsukushi (354 aa).

Positions 1–17 are cleaved as a signal peptide; sequence MLCSLFLLLLAVGRVQT. The region spanning 18–59 is the LRRNT domain; the sequence is TRPCFPGCQCEEETFGLFDSFSLIRVDCSSLGPHIVPVPIPL. LRR repeat units lie at residues 60 to 81, 86 to 107, 110 to 131, 133 to 154, 160 to 180, 186 to 207, 208 to 228, 231 to 253, 256 to 277, and 281 to 302; these read DTAHLDLSSNRLETVNESVLAG, TLAGLDLSYNLLTSIMPSAFSR, YLESLDLSHNGLAALPAEIFTS, PLSDINLSHNRLREVSISAFTT, ALHVDLSHNLIHRLLPHPARA, TIQSLNLSWNRFRAVPDLRDLP, LRYLSLDGNPLATINPDAFMG, GLTHLSLASLQGILHLPPHGFRE, GLQVLDLSGNPKLKWAGAEVFS, and LLQELDLSGSSLVPLPEMLLHH. N-linked (GlcNAc...) asparagine glycosylation occurs at N75. N138 carries N-linked (GlcNAc...) asparagine glycosylation. N191 carries N-linked (GlcNAc...) asparagine glycosylation.

Interacts with FZD4 (via FZ domain); competes with WNT2B for binding to FZD4, inhibiting Wnt signaling and repressing peripheral eye development. Interacts with TGFB1; the interaction contributes to regulation of the hair cycle. Interacts with netrin. Interacts with CCN2. Expressed in macrophages in inflamed wounds with wound expression starting 2 days post-wounding (dpw) (at protein level). At 7 dpw, expressed from epidermis and extracellular matrix in the wound edge to neoepidermis and granulation tissue and in panniculus carnosus under the granulation tissue (at protein level). After fibrosis, disappears in the dermal area at 11 dpw (at protein level). Expressed in the hair follicle during morphogenesis and the hair cycle (at protein level). In embryonic brain, strong expression in the olfactory bulb, anterior olfactory nucleus, neocortex, piriform cortex, glial wedge, midline zipper glia, indusium griseum and the area surrounding the anterior commissure (AC) but not on AC axons (at protein level). In the adult eye, expressed in retinal layers, lens epithelium, and ciliary body where it is expressed predominantly in the inner non-pigmented layer. Expressed in almost all brain regions in the embryo, in the cortex and the lateral ventricle at P0 and is restricted to the subventricular zone and lateral nucleus of the amygdala in adults. Prominent expression in hippocampal regions from early postnatal stages until postnatal day 15 and gradually declines at later stages. Expressed in almost all bone regions in the femurs of juveniles. In the inner ear, accumulates in nonprosensory regions during early embryonic stages and in both nonprosensory and prosensory regions in late embryonic stages. In the adult ear, expressed in the organ of Corti, spiral ganglion cells, and the stria vascularis. Highly expressed in the liver where it is detected primarily in hepatocytes but not in non-parenchymal cells.

The protein localises to the secreted. Its function is as follows. Contributes to various developmental events and other processes such as wound healing and cholesterol homeostasis through its interactions with multiple signaling pathways. Wnt signaling inhibitor which competes with WNT2B for binding to Wnt receptor FZD4 and represses WNT2B-dependent development of the peripheral eye. Plays a role in regulating the hair cycle by controlling TGFB1 signaling. Required for the development of the anterior commissure in the brain by inhibiting neurite outgrowth. Essential for terminal differentiation of hippocampal neural stem cells. Plays a role in regulating bone elongation and bone mass by modulating growth plate chondrocyte function and overall body size. Required for development of the inner ear through its involvement in stereocilia formation in inner hair cells. Facilitates wound healing by inhibiting secretion of TGFB1 from macrophages which prevents myofibroblast differentiation, maintaining inflammatory cell quiescence. Plays a role in cholesterol homeostasis by reducing circulating high-density lipoprotein cholesterol, lowering cholesterol efflux capacity and decreasing cholesterol-to-bile acid conversion in the liver. In one study, shown to negatively regulate sympathetic innervation in brown fat, leading to reduced energy expenditure. In another study, shown not to affect brown fat thermogenic capacity, body weight gain or glucose homeostasis. The sequence is that of Tsukushi from Mus musculus (Mouse).